A 132-amino-acid polypeptide reads, in one-letter code: Small ribosomal subunit protein uS8 (132 aa).

It belongs to the universal ribosomal protein uS8 family. Part of the 30S ribosomal subunit. Contacts proteins S5 and S12.

Functionally, one of the primary rRNA binding proteins, it binds directly to 16S rRNA central domain where it helps coordinate assembly of the platform of the 30S subunit. This Staphylococcus haemolyticus (strain JCSC1435) protein is Small ribosomal subunit protein uS8.